The chain runs to 361 residues: Beta-hexosaminidase (361 aa).

Substrate is bound by residues aspartate 69, arginine 77, arginine 144, and 174 to 175 (KH). The active-site Proton donor/acceptor is the histidine 187. The Nucleophile role is filled by aspartate 258.

Belongs to the glycosyl hydrolase 3 family. NagZ subfamily.

It is found in the cytoplasm. It catalyses the reaction Hydrolysis of terminal non-reducing N-acetyl-D-hexosamine residues in N-acetyl-beta-D-hexosaminides.. The protein operates within cell wall biogenesis; peptidoglycan recycling. Functionally, plays a role in peptidoglycan recycling by cleaving the terminal beta-1,4-linked N-acetylglucosamine (GlcNAc) from peptide-linked peptidoglycan fragments, giving rise to free GlcNAc, anhydro-N-acetylmuramic acid and anhydro-N-acetylmuramic acid-linked peptides. This chain is Beta-hexosaminidase, found in Neisseria gonorrhoeae (strain ATCC 700825 / FA 1090).